A 720-amino-acid polypeptide reads, in one-letter code: Zinc finger protein 408 (720 aa).

The segment at 201 to 350 (VQQEVASPGE…GPAGSSPKQG (150 aa)) is disordered. The span at 275–285 (LQSNSATQQDP) shows a compositional bias: polar residues. Residues 287 to 296 (GSGASFSSSA) are compositionally biased toward low complexity. Residue threonine 322 is modified to Phosphothreonine. 10 consecutive C2H2-type zinc fingers follow at residues 353 to 375 (YRCG…AFVH), 381 to 403 (FLCT…MLGH), 409 to 431 (FPCP…QVVH), 437 to 459 (FACD…RKTH), 468 to 490 (CPCP…MRLH), 496 to 518 (FLCP…LRLH), 524 to 546 (YRCP…LISH), 551 to 573 (HLCP…ERLH), 579 to 601 (FPCP…LKSH), and 607 to 629 (YRCP…QLSH).

Highest expression is observed in adult retina; abundantly expressed in the fetal eye. In the retina, it is detected in the outer nuclear layer, especially cone and rod photoreceptor cells, ganglion cell layer and both outer and inner plexiform layers (at protein level). Expressed in retinal blood vessels (at protein level).

The protein localises to the nucleus. Its function is as follows. May be involved in transcriptional regulation. The protein is Zinc finger protein 408 (ZNF408) of Homo sapiens (Human).